The primary structure comprises 212 residues: Thaumatin-like protein 1b (212 aa).

7 disulfides stabilise this stretch: Cys-47-Cys-57, Cys-62-Cys-69, Cys-117-Cys-200, Cys-122-Cys-183, Cys-130-Cys-146, Cys-150-Cys-159, and Cys-160-Cys-170.

It belongs to the thaumatin family.

Its subcellular location is the secreted. In Malus domestica (Apple), this protein is Thaumatin-like protein 1b.